We begin with the raw amino-acid sequence, 514 residues long: Alstonine synthase (514 aa).

Residues 4–24 traverse the membrane as a helical segment; the sequence is PQFSCLLPAFFLLVVFLFLLI. Asparagine 428 is a glycosylation site (N-linked (GlcNAc...) asparagine). A heme-binding site is contributed by cysteine 450.

The protein belongs to the cytochrome P450 family. Heme is required as a cofactor.

The protein localises to the membrane. It carries out the reaction tetrahydroalstonine + A + reduced [NADPH--hemoprotein reductase] + O2 = alstonine + AH2 + oxidized [NADPH--hemoprotein reductase] + 2 H2O + H(+). It functions in the pathway alkaloid biosynthesis. In terms of biological role, a cytochrome P450 monooxygenase involved in the biosynthesis of pentacyclic alkaloids natural products such as alstonine, putative antipsychotic compounds. Catalyzes the conversion of tetrahydroalstonine to alstonine. No oxidative activity towards ajmalicine. The protein is Alstonine synthase of Alstonia scholaris (Dogbane).